Consider the following 47-residue polypeptide: uncharacterized protein (47 aa).

This is an uncharacterized protein from Bacillus subtilis (strain 168).